The chain runs to 646 residues: P-selectin (646 aa).

Positions 1-41 (MASCPKAIWNWRFQRAVFRTVQLLCFSVLIFEVINQKEVSA) are cleaved as a signal peptide. At 42–587 (WTYHYSNKTY…QAGPLTIQET (546 aa)) the chain is on the extracellular side. 3 N-linked (GlcNAc...) asparagine glycosylation sites follow: Asn48, Asn54, and Asn80. In terms of domain architecture, C-type lectin spans 58–158 (AFCQKYYTDL…PCWKRKRALC (101 aa)). Intrachain disulfides connect Cys60/Cys158, Cys131/Cys150, Cys163/Cys174, Cys168/Cys183, Cys185/Cys194, Cys200/Cys244, Cys230/Cys257, Cys262/Cys306, Cys292/Cys319, Cys324/Cys368, Cys354/Cys381, Cys386/Cys430, Cys416/Cys443, Cys458/Cys502, Cys488/Cys515, Cys520/Cys564, and Cys550/Cys577. Ca(2+)-binding residues include Glu121, Asn123, and Asn124. An a carbohydrate-binding site is contributed by Asn123. A carbohydrate-binding residues include Glu133 and Asn146. Positions 146 and 147 each coordinate Ca(2+). The EGF-like domain maps to 159 to 195 (YRASCQDMSCSKQGECIETIGNYTCSCYPGFYGPECE). Residue Asn180 is glycosylated (N-linked (GlcNAc...) asparagine). Sushi domains follow at residues 198-259 (RECG…QCVA), 260-321 (VQCP…VCKA), 322-383 (LQCQ…ECQA), 384-445 (VTCA…TCEE), 456-517 (VQCP…TCRA), and 518-579 (VKCA…TCQA). N-linked (GlcNAc...) asparagine glycosylation is found at Asn212 and Asn219. N-linked (GlcNAc...) asparagine glycosylation occurs at Asn336. Asn481 carries N-linked (GlcNAc...) asparagine glycosylation. N-linked (GlcNAc...) asparagine glycosylation is found at Asn532, Asn539, and Asn557. A helical membrane pass occupies residues 588–611 (LTYVGGAAAGTTGLVTGSILLALL). At 612–646 (RRRCRQKDDGKSPLNPQSHLGTYGVFTNAAFDPSP) the chain is on the cytoplasmic side. The short motif at 634-637 (YGVF) is the Endocytosis signal element. Residues 637 to 646 (FTNAAFDPSP) form an interaction with SNX17 region.

This sequence belongs to the selectin/LECAM family. As to quaternary structure, interacts with SNX17. Interacts with SELPLG/PSGL1 and PODXL2 and mediates neutrophil adhesion and leukocyte rolling. This interaction requires the sialyl-Lewis X epitope of SELPLG and PODXL2, and specific tyrosine sulfation on SELPLG. Interacts (via C-type lectin domain) with alpha-IIb/beta3 integrin ITGA2B:ITGB3 and alpha-V/beta-3 integrin ITGAV:ITGB3. Interacts with alpha5/beta1 integrin ITGA5:ITGB1 and alpha4/beta1 integrin ITGA4:ITGB. In terms of tissue distribution, stored in the alpha-granules of platelets and Weibel-Palade bodies of endothelial cells. Upon cell activation by agonists, P-selectin is transported rapidly to the cell surface.

The protein resides in the cell membrane. Its function is as follows. Ca(2+)-dependent receptor for myeloid cells that binds to carbohydrates on neutrophils and monocytes. Mediates the interaction of activated endothelial cells or platelets with leukocytes. The ligand recognized is sialyl-Lewis X. Mediates rapid rolling of leukocyte rolling over vascular surfaces during the initial steps in inflammation through interaction with SELPLG. Mediates cell-cell interactions and cell adhesion via the interaction with integrin alpha-IIb/beta3 (ITGA2B:ITGB3) and integrin alpha-V/beta-3 (ITGAV:ITGB3). This is P-selectin (SELP) from Bos taurus (Bovine).